Consider the following 154-residue polypeptide: uncharacterized protein (154 aa).

4 helical membrane-spanning segments follow: residues 20 to 42 (FRLF…GQFG), 62 to 84 (FFGY…AVLL), 91 to 109 (ALGA…LINY), and 113 to 132 (IGVQ…LLWM).

It is found in the cell membrane. This is an uncharacterized protein from Bacillus subtilis (strain 168).